A 1009-amino-acid polypeptide reads, in one-letter code: Ulvan lyase, long isoform (1009 aa).

The N-terminal stretch at 1–32 (MTAQKSKYFNRIMTMNTLLFSLLTVGFSQAYA) is a signal peptide. Residue 137–138 (SH) coordinates substrate. The active-site Proton donor/acceptor is H138. Ca(2+) is bound by residues D200, D210, and K212. 2 residues coordinate substrate: Y291 and R308. Positions 311, 314, and 316 each coordinate Ca(2+). Y372 contacts substrate.

This sequence belongs to the polysaccharide lyase 24 family.

Its function is as follows. Ulvan lyase involved in ulvan degradation. Ulvan is the main polysaccharide component of the Ulvales (green seaweed) cell wall. It is composed of disaccharide building blocks comprising 3-sulfated rhamnose (Rha3S) linked to D-glucuronic acid (GlcA), L-iduronic acid (IduA), or D-xylose (Xyl). Ulvan lyase catalyzes preferentially the endolytic cleavage of the glycosidic bond between Rha3S and the uronic acid GlcA, but not IduA, producing oligosaccharides that have unsaturated 4-deoxy-L-threo-hex-4-enopyranosiduronic acid (deltaUA) at the non-reducing end. The most abundant end products in the degradation of the ulvan polysaccharide were deltaUA-Rha3S disaccharides and deltaUA-Rha3S-IduA-Rha3S and deltaUA-Rha3S-Xyl-Rha3S tetrasaccharides. The polypeptide is Ulvan lyase, long isoform (ullA) (Glaciecola sp. (strain KUL10)).